Reading from the N-terminus, the 222-residue chain is Ribosomal RNA small subunit methyltransferase G (222 aa).

S-adenosyl-L-methionine contacts are provided by residues Gly84, Phe89, 141 to 142 (VE), and Arg154.

Belongs to the methyltransferase superfamily. RNA methyltransferase RsmG family.

It localises to the cytoplasm. It catalyses the reaction guanosine(527) in 16S rRNA + S-adenosyl-L-methionine = N(7)-methylguanosine(527) in 16S rRNA + S-adenosyl-L-homocysteine. Specifically methylates the N7 position of guanine in position 527 of 16S rRNA. This is Ribosomal RNA small subunit methyltransferase G from Bradyrhizobium sp. (strain ORS 278).